The chain runs to 148 residues: Single-stranded DNA-binding protein 2 (148 aa).

Positions 6 to 108 (MNHITVSGLV…IEAESFGHDL (103 aa)) constitute an SSB domain.

As to quaternary structure, homotetramer.

The sequence is that of Single-stranded DNA-binding protein 2 (ssb2) from Tropheryma whipplei (strain TW08/27) (Whipple's bacillus).